Reading from the N-terminus, the 274-residue chain is NH(3)-dependent NAD(+) synthetase (274 aa).

ATP is bound at residue 46–53; sequence GISGGQDS. Residue aspartate 52 coordinates Mg(2+). Arginine 140 is a binding site for deamido-NAD(+). Threonine 160 lines the ATP pocket. A Mg(2+)-binding site is contributed by glutamate 165. The deamido-NAD(+) site is built by lysine 173 and aspartate 180. Lysine 189 and threonine 211 together coordinate ATP. A deamido-NAD(+)-binding site is contributed by 260 to 261; it reads HK.

The protein belongs to the NAD synthetase family. In terms of assembly, homodimer.

The enzyme catalyses deamido-NAD(+) + NH4(+) + ATP = AMP + diphosphate + NAD(+) + H(+). The protein operates within cofactor biosynthesis; NAD(+) biosynthesis; NAD(+) from deamido-NAD(+) (ammonia route): step 1/1. Its function is as follows. Catalyzes the ATP-dependent amidation of deamido-NAD to form NAD. Uses ammonia as a nitrogen source. This Lactococcus lactis subsp. lactis (strain IL1403) (Streptococcus lactis) protein is NH(3)-dependent NAD(+) synthetase.